The chain runs to 688 residues: Sodium channel and clathrin linker 1 (688 aa).

Residue Ala2 is modified to N-acetylalanine. 2 coiled-coil regions span residues 59–108 and 152–673; these read LIAE…AVEK and QTAS…SVIT. Phosphoserine is present on Ser681.

As to quaternary structure, interacts with SCN10A and clathrin. Identified in a complex containing SCN10A, clathrin and SCLT1.

It is found in the cytoplasm. Its subcellular location is the cytoskeleton. The protein resides in the microtubule organizing center. The protein localises to the centrosome. It localises to the centriole. Adapter protein that links SCN10A to clathrin. Regulates SCN10A channel activity, possibly by promoting channel internalization. This Mus musculus (Mouse) protein is Sodium channel and clathrin linker 1 (Sclt1).